A 217-amino-acid polypeptide reads, in one-letter code: MKVELTAIEARVIGCLIEKEVTTPDQYPLSLNALTNACNQKSNREPVMSLSEADVLYAVDALIERRLVSDESGFNSRVSKYQHRFCNTEFGDLKLTKQEKGIVCCMLLRGAQTPGEIRTRTNRLATFNDVKEVENVLEHLANDEKGPLVVKLPREAGKRESRYMHLFCGEVDVSELAVATTAPSSAGSERITQLEQEVAELREELAALKEQVESLFS.

It belongs to the UPF0502 family.

This Vibrio campbellii (strain ATCC BAA-1116) protein is UPF0502 protein VIBHAR_05349.